We begin with the raw amino-acid sequence, 485 residues long: Pre-glycoprotein polyprotein GP complex (485 aa).

The N-myristoyl glycine; by host moiety is linked to residue Gly2. Over 2-17 (GQLISFFGEIPTILQE) the chain is Extracellular. Residues 18–33 (ALNIALIAVSIIATIK) form a helical membrane-spanning segment. Residues 34–58 (GVVNVWKSGLIQLLMFVMLAGRSCS) are Cytoplasmic-facing. Cys57 is a Zn(2+) binding site. Over 59 to 424 (VQIGHHLELE…QGRTPLSLVD (366 aa)) the chain is Extracellular. 4 disulfides stabilise this stretch: Cys85–Cys225, Cys271–Cys284, Cys293–Cys302, and Cys356–Cys377. Residues Asn88, Asn128, Asn179, and Asn218 are each glycosylated (N-linked (GlcNAc...) asparagine; by host). Residues Asn357, Asn365, Asn382, and Asn387 are each glycosylated (N-linked (GlcNAc...) asparagine; by host). Residues 425-445 (VCFWSTLFYTASIFLHLIRIP) traverse the membrane as a helical segment. Residues 446 to 485 (THRHIVGEGCPKPHRLRADSTCACGLYKQKRRPLKWVRSN) are Cytoplasmic-facing. Zn(2+) contacts are provided by His447, His449, Cys455, His459, Cys467, and Cys469.

The protein belongs to the arenaviridae GPC protein family. Interacts with glycoprotein G2. Part of the GP complex (GP-C) together with glycoprotein G1 and glycoprotein G2. The GP-complex interacts with protein Z, which interacts with ribonucleocapsid; these interactions may induce virion budding. As to quaternary structure, homotrimer; disulfide-linked. In pre-fusion state, G1 homotrimers bind G2 homotrimers via ionic interactions. Part of the GP complex (GP-C) together with glycoprotein G2 and the stable signal peptide. The GP-complex interacts with protein Z, which interacts with ribonucleocapsid; these interactions may induce virion budding. In terms of assembly, homotrimer. Interacts with the stable signal peptide. In pre-fusion state, G2 homotrimers bind G1 homotrimers via ionic interactions. Part of the GP complex (GP-C) together with glycoprotein G1 and the stable signal peptide. Acidification in the endosome triggers rearrangements, which ultimately leads to a 6 helix bundle formed by the two heptad repeat domains (HR1 and HR2) in post-fusion state. The GP-complex interacts with protein Z, which interacts with ribonucleocapsid; these interactions may induce virion budding. Specific enzymatic cleavages in vivo yield mature proteins. GP-C polyprotein is cleaved in the endoplasmic reticulum by the host protease MBTPS1. Only cleaved glycoprotein is incorporated into virions. In terms of processing, the SSP remains stably associated with the GP complex following cleavage by signal peptidase and plays crucial roles in the trafficking of GP through the secretory pathway. Post-translationally, myristoylation is necessary for GP2-mediated fusion activity.

The protein localises to the virion membrane. The protein resides in the host endoplasmic reticulum membrane. Its subcellular location is the host Golgi apparatus membrane. It is found in the host cell membrane. Functions as a cleaved signal peptide that is retained as the third component of the GP complex (GP-C). Helps to stabilize the spike complex in its native conformation. The SSP is required for efficient glycoprotein expression, post-translational maturation cleavage of G1 and G2, glycoprotein transport to the cell surface plasma membrane, formation of infectious virus particles, and acid pH-dependent glycoprotein-mediated cell fusion. Functionally, forms the virion spikes together with glycoprotein G2. The glycoprotein spike trimers are connected to the underlying matrix. Interacts with the host receptor leading to virus endocytosis. In terms of biological role, forms the virion spikes together with glycoprotein G1. The glycoprotein spike trimers are connected to the underlying matrix. Class I viral fusion protein that directs fusion of viral and host endosomal membranes, leading to delivery of the nucleocapsid into the cytoplasm. Membrane fusion is mediated by irreversible conformational changes induced by acidification. The protein is Pre-glycoprotein polyprotein GP complex of Sigmodon hispidus (Hispid cotton rat).